Reading from the N-terminus, the 134-residue chain is MAKKWLNKVKWDDNGLVPVIVQEAGSNDVLMFAFMNRDALLRTVELGEAVFWSRSRKRLWHKGEESGHVQKVHEIRLDCDEDVVLLKVTQVDSIACHTGRHSCFFQKFDGDADTGDWQTVEPVLKDPAQIYTKP.

D78 serves as a coordination point for Mg(2+). C79 serves as a coordination point for Zn(2+). 2 residues coordinate Mg(2+): D80 and D82. Zn(2+) is bound by residues C96 and C103.

It belongs to the PRA-CH family. As to quaternary structure, homodimer. Requires Mg(2+) as cofactor. It depends on Zn(2+) as a cofactor.

The protein resides in the cytoplasm. It carries out the reaction 1-(5-phospho-beta-D-ribosyl)-5'-AMP + H2O = 1-(5-phospho-beta-D-ribosyl)-5-[(5-phospho-beta-D-ribosylamino)methylideneamino]imidazole-4-carboxamide. The protein operates within amino-acid biosynthesis; L-histidine biosynthesis; L-histidine from 5-phospho-alpha-D-ribose 1-diphosphate: step 3/9. In terms of biological role, catalyzes the hydrolysis of the adenine ring of phosphoribosyl-AMP. The polypeptide is Phosphoribosyl-AMP cyclohydrolase (Cupriavidus taiwanensis (strain DSM 17343 / BCRC 17206 / CCUG 44338 / CIP 107171 / LMG 19424 / R1) (Ralstonia taiwanensis (strain LMG 19424))).